We begin with the raw amino-acid sequence, 249 residues long: Mediator of RNA polymerase II transcription subunit 8 (249 aa).

Residues 1-26 (MQREEKQLDMLLEAVLNRLNDLKHSI) are a coiled coil. 2 stretches are compositionally biased toward polar residues: residues 215 to 224 (SPMSAVSPSG) and 235 to 249 (IKTN…HPYR). Positions 215 to 249 (SPMSAVSPSGNAPMGKMPSGIKTNIKSANQVHPYR) are disordered.

The protein belongs to the Mediator complex subunit 8 family. In terms of assembly, component of the Mediator complex.

The protein localises to the nucleus. Functionally, component of the Mediator complex, a coactivator involved in the regulated transcription of nearly all RNA polymerase II-dependent genes. Mediator functions as a bridge to convey information from gene-specific regulatory proteins to the basal RNA polymerase II transcription machinery. Mediator is recruited to promoters by direct interactions with regulatory proteins and serves as a scaffold for the assembly of a functional preinitiation complex with RNA polymerase II and the general transcription factors. This chain is Mediator of RNA polymerase II transcription subunit 8 (MED8), found in Anopheles gambiae (African malaria mosquito).